The following is a 1040-amino-acid chain: Multidrug resistance protein MdtB (1040 aa).

Transmembrane regions (helical) follow at residues 16 to 36, 347 to 367, 369 to 389, 396 to 416, 440 to 460, 472 to 492, 537 to 557, 863 to 883, 888 to 908, 911 to 931, 968 to 988, and 998 to 1018; these read FIMR…AGII, LMMA…NIPA, IIPG…MVFL, LTLM…IVVI, IGFT…PLLF, FAIT…TLTP, WLTL…WVFI, LGST…VLGI, FIHP…ALLA, IAGS…IGIV, ILMT…STGV, and IGMV…TPVI.

It belongs to the resistance-nodulation-cell division (RND) (TC 2.A.6) family. MdtB subfamily. As to quaternary structure, part of a tripartite efflux system composed of MdtA, MdtB and MdtC. MdtB forms a heteromultimer with MdtC.

It is found in the cell inner membrane. In terms of biological role, the MdtABC tripartite complex confers resistance against novobiocin and deoxycholate. The sequence is that of Multidrug resistance protein MdtB from Escherichia coli O7:K1 (strain IAI39 / ExPEC).